The sequence spans 251 residues: Capsid protein (251 aa).

The tract at residues 1–27 (MPKRDLPWRSMPGTSKTSRNANYSPRA) is disordered. A Bipartite nuclear localization signal motif is present at residues 3 to 20 (KRDLPWRSMPGTSKTSRN). Positions 12–23 (PGTSKTSRNANY) are enriched in polar residues. The short motif at 35–49 (KASEWVHRPMYRKPR) is the Nuclear localization signal element. Residues 63–80 (CEGPCKVQSYEQRHDISH) fold into a zinc finger. The Nuclear export signal motif lies at 96–117 (ITHRVGKRFCVKSVYILGKIWM). The short motif at 195-242 (KRFWKVNNHVVYNHQEAGKYENHTENALLLYMACTHASNPVYATLKIR) is the Bipartite nuclear localization signal element.

This sequence belongs to the geminiviridae capsid protein family. In terms of assembly, homomultimer. Binds to single-stranded and double-stranded viral DNA. Interacts (via nuclear localization signals) with host importin alpha-1a.

It localises to the virion. The protein resides in the host nucleus. Its function is as follows. Encapsidates the viral DNA into characteristic twinned ('geminate') particles. Binds the genomic viral ssDNA and shuttles it into and out of the cell nucleus. The CP of bipartite geminiviruses is not required for cell-to-cell or systemic movement. In Abutilon (Upland cotton), this protein is Capsid protein.